The chain runs to 270 residues: UPF0354 protein BA_4944/GBAA_4944/BAS4588 (270 aa).

The protein belongs to the UPF0354 family.

The protein is UPF0354 protein BA_4944/GBAA_4944/BAS4588 of Bacillus anthracis.